The sequence spans 426 residues: Immunoglobulin mu Fc receptor (426 aa).

The N-terminal stretch at 1-16 (MNLWLWLLYFLPVSGT) is a signal peptide. The Ig-like domain maps to 24-121 (RLEVELGGSV…GKTQKVTLNV (98 aa)). Intrachain disulfides connect Cys-37/Cys-103 and Cys-49/Cys-58. At Thr-91 the chain carries Phosphothreonine. A disordered region spans residues 178–212 (KTEAPPVHQPSTNTSVSRHPRVYGASSETPTKPSA). Residues 267-287 (FHILIPTFLGFLLLVLLGLVV) form a helical membrane-spanning segment. Disordered stretches follow at residues 306 to 346 (RRMR…REPD) and 401 to 426 (DSND…PSRQ). The segment covering 415–426 (PSKPPGPRPSRQ) has biased composition (pro residues).

In terms of assembly, interacts (via Ig-like domain) with IGHM (via CH4/Cmu4 domain), both secreted and membrane-bound IgM; the interaction is glycan-independent and multivalent theoretically involving up to eight binding sites for the IgM pentamer. Phosphorylated on both Tyr and Ser residues. Post-translationally, O-glycosylated. Sialylated. O-linked glycans regulate trafficking to the plasma membrane.

The protein localises to the cell membrane. Its subcellular location is the early endosome membrane. It localises to the golgi apparatus. It is found in the trans-Golgi network membrane. The protein resides in the lysosome membrane. Its function is as follows. High-affinity Fc receptor for immunoglobulin M (IgM), both secreted and membrane-bound IgM. Primarily regulates IgM transport and homeostasis. In lymphoid cells, enables exocytosis of membrane-bound IgM on the plasma membrane as well as endocytosis of IgM-antigen complexes toward lysosomes for degradation. In mucosal epithelium, mediates retrotranscytosis of antigen-IgM complexes across mucosal M cells toward antigen-presenting cells in mucosal lymphoid tissues. Triggers costimulatory signaling and mediates most of IgM effector functions involved in B cell development and primary immune response to infection. Likely limits tonic IgM BCR signaling to self-antigens for proper negative selection of autoreactive B cells in the bone marrow and for the maintenance of regulatory B cell pool in peripheral lymphoid organs. Mediates antibody responses to T cell-dependent and T cell-independent antigens and promotes induction of an efficient neutralizing IgG response. Engages in cross-talk with antigen-receptor signaling via the non-canonical NF-kappa-B, MAP kinases and calcium signaling pathways. In Rattus norvegicus (Rat), this protein is Immunoglobulin mu Fc receptor.